The primary structure comprises 137 residues: Integration host factor subunit beta (137 aa).

Residues 75-92 are compositionally biased toward basic and acidic residues; that stretch reads KRVPHFKAGKELRERVDR. A disordered region spans residues 75-137; it reads KRVPHFKAGK…EGGGLNLARS (63 aa). The span at 128-137 shows a compositional bias: gly residues; the sequence is EGGGLNLARS.

The protein belongs to the bacterial histone-like protein family. In terms of assembly, heterodimer of an alpha and a beta chain.

In terms of biological role, this protein is one of the two subunits of integration host factor, a specific DNA-binding protein that functions in genetic recombination as well as in transcriptional and translational control. This is Integration host factor subunit beta from Cupriavidus pinatubonensis (strain JMP 134 / LMG 1197) (Cupriavidus necator (strain JMP 134)).